The following is a 207-amino-acid chain: Urease accessory protein UreG (207 aa).

A GTP-binding site is contributed by 16-23 (GPVGSGKT).

Belongs to the SIMIBI class G3E GTPase family. UreG subfamily. In terms of assembly, homodimer. UreD, UreF and UreG form a complex that acts as a GTP-hydrolysis-dependent molecular chaperone, activating the urease apoprotein by helping to assemble the nickel containing metallocenter of UreC. The UreE protein probably delivers the nickel.

It is found in the cytoplasm. Facilitates the functional incorporation of the urease nickel metallocenter. This process requires GTP hydrolysis, probably effectuated by UreG. The chain is Urease accessory protein UreG from Blochmanniella pennsylvanica (strain BPEN).